A 277-amino-acid polypeptide reads, in one-letter code: Histone-lysine N-methyltransferase set-17 (277 aa).

One can recognise an SET domain in the interval 135–246 (FRIEESKLPN…INQELLVWYG (112 aa)). Residue Tyr-245 participates in S-adenosyl-L-methionine binding.

Belongs to the class V-like SAM-binding methyltransferase superfamily. Expressed in the germline. Predominantly expressed in primary spermatocytes. Also expressed in the oocyte-producing germline of hermaphrodites.

Its subcellular location is the nucleus. The enzyme catalyses N(6)-methyl-L-lysyl(4)-[histone H3] + S-adenosyl-L-methionine = N(6),N(6)-dimethyl-L-lysyl(4)-[histone H3] + S-adenosyl-L-homocysteine + H(+). It catalyses the reaction L-lysyl(4)-[histone H3] + S-adenosyl-L-methionine = N(6)-methyl-L-lysyl(4)-[histone H3] + S-adenosyl-L-homocysteine + H(+). In terms of biological role, histone methyltransferase that specifically mono- and di-methylates 'Lys-4' of histone H3 in vitro. Does not tri-methylate 'Lys-4' of histone H3 in vitro. Promotes spermatid development and fertility by positively regulating the transcription of spermatocyte-specific genes in primary spermatocytes. Together with spr-5, required for transgenerational fertility. The polypeptide is Histone-lysine N-methyltransferase set-17 (Caenorhabditis elegans).